A 137-amino-acid polypeptide reads, in one-letter code: uncharacterized protein (137 aa).

The next 4 membrane-spanning stretches (helical) occupy residues 14 to 34, 48 to 68, 84 to 104, and 109 to 129; these read AVVV…GSIS, YHII…SLSI, FFTI…LGLT, and HIPS…LNLF.

It localises to the cell membrane. This is an uncharacterized protein from Methanocaldococcus jannaschii (strain ATCC 43067 / DSM 2661 / JAL-1 / JCM 10045 / NBRC 100440) (Methanococcus jannaschii).